The chain runs to 518 residues: D-aminopeptidase (518 aa).

The active-site Nucleophile is the serine 62. The active-site Proton donor/acceptor is the lysine 65. The tract at residues 477 to 487 (QRSMDAPSPGE) is important for specificity. A substrate-binding site is contributed by aspartate 481.

This sequence belongs to the peptidase S12 family. Homodimer.

The enzyme catalyses Release of an N-terminal D-amino acid from a peptide, Xaa-|-Yaa-, in which Xaa is preferably D-Ala, D-Ser or D-Thr. D-amino acid amides and methyl esters also are hydrolyzed, as is glycine amide.. Its activity is regulated as follows. Inhibited by beta-lactam compounds such as 6-aminopenicillic acid, 7-aminocephalosporanic acid, benzylpenicillin and ampicillin. Inhibited by p-chloromercuribenzoate. In terms of biological role, hydrolyzes N-terminal residues in D-amino acid-containing peptides. In Brucella abortus (strain S19), this protein is D-aminopeptidase.